Consider the following 379-residue polypeptide: Protein FAM53B (379 aa).

Disordered regions lie at residues 206–257 (CPAE…HKQR) and 302–348 (AQND…AGKE). The segment covering 212–236 (SPESTPELQRRSGQSGLARSRSQPC) has biased composition (polar residues). Residues 239–249 (NHQKIGVKRRR) are compositionally biased toward basic residues. The short motif at 246–249 (KRRR) is the Nuclear localization signal element. Polar residues predominate over residues 326-342 (QSDSSSADALIHQSESS).

It belongs to the FAM53 family. Interacts with ctnnb1. As to expression, mainly expressed in proliferating tissues.

It is found in the nucleus. Acts as a regulator of Wnt signaling pathway by regulating beta-catenin (ctnnb1) nuclear localization. Required for appendage regeneration by regulating cell proliferation. In Danio rerio (Zebrafish), this protein is Protein FAM53B.